We begin with the raw amino-acid sequence, 415 residues long: Gamma-glutamyl phosphate reductase (415 aa).

This sequence belongs to the gamma-glutamyl phosphate reductase family.

It is found in the cytoplasm. It carries out the reaction L-glutamate 5-semialdehyde + phosphate + NADP(+) = L-glutamyl 5-phosphate + NADPH + H(+). It participates in amino-acid biosynthesis; L-proline biosynthesis; L-glutamate 5-semialdehyde from L-glutamate: step 2/2. Catalyzes the NADPH-dependent reduction of L-glutamate 5-phosphate into L-glutamate 5-semialdehyde and phosphate. The product spontaneously undergoes cyclization to form 1-pyrroline-5-carboxylate. The protein is Gamma-glutamyl phosphate reductase of Desulforamulus reducens (strain ATCC BAA-1160 / DSM 100696 / MI-1) (Desulfotomaculum reducens).